The chain runs to 25 residues: Snake venom metalloproteinase catroxase (25 aa).

Glutamate 9 serves as a coordination point for Ca(2+).

Belongs to the venom metalloproteinase (M12B) family. As to quaternary structure, monomer. Zn(2+) serves as cofactor. As to expression, expressed by the venom gland.

The protein resides in the secreted. With respect to regulation, inhibited by EDTA, beta-mercaptoethanol, but not by PMSF, p-tosyl-L-phenylalanine chloromethyl ketone, p-tosyl-L-lysine chloromethyl ketone, soybean trypsin inhibitor and aprotinin. Its function is as follows. Metalloprotease that is highly active against alpha-(FGA) and beta-chains (FGB) of fibrinogen molecules. The polypeptide is Snake venom metalloproteinase catroxase (Crotalus atrox (Western diamondback rattlesnake)).